We begin with the raw amino-acid sequence, 85 residues long: Large ribosomal subunit protein bL31B (85 aa).

It belongs to the bacterial ribosomal protein bL31 family. Type B subfamily. Part of the 50S ribosomal subunit.

The polypeptide is Large ribosomal subunit protein bL31B (Macrococcus caseolyticus (strain JCSC5402) (Macrococcoides caseolyticum)).